The primary structure comprises 363 residues: Chorismate synthase (363 aa).

NADP(+)-binding residues include Arg48 and Arg54. FMN contacts are provided by residues 125–127 (RSS), 237–238 (NA), Gly277, 292–296 (KPTSS), and Arg318.

Belongs to the chorismate synthase family. As to quaternary structure, homotetramer. The cofactor is FMNH2.

It catalyses the reaction 5-O-(1-carboxyvinyl)-3-phosphoshikimate = chorismate + phosphate. The protein operates within metabolic intermediate biosynthesis; chorismate biosynthesis; chorismate from D-erythrose 4-phosphate and phosphoenolpyruvate: step 7/7. Its function is as follows. Catalyzes the anti-1,4-elimination of the C-3 phosphate and the C-6 proR hydrogen from 5-enolpyruvylshikimate-3-phosphate (EPSP) to yield chorismate, which is the branch point compound that serves as the starting substrate for the three terminal pathways of aromatic amino acid biosynthesis. This reaction introduces a second double bond into the aromatic ring system. This chain is Chorismate synthase, found in Pseudomonas entomophila (strain L48).